Reading from the N-terminus, the 592-residue chain is Arginine--tRNA ligase (592 aa).

A 'HIGH' region motif is present at residues 134–144; it reads ANPTGPLHVGH.

It belongs to the class-I aminoacyl-tRNA synthetase family. As to quaternary structure, monomer.

The protein resides in the cytoplasm. The enzyme catalyses tRNA(Arg) + L-arginine + ATP = L-arginyl-tRNA(Arg) + AMP + diphosphate. This is Arginine--tRNA ligase from Coxiella burnetii (strain CbuK_Q154) (Coxiella burnetii (strain Q154)).